The sequence spans 227 residues: Cytidylate kinase (227 aa).

Residue 12 to 20 coordinates ATP; the sequence is GPSGAGKGT.

This sequence belongs to the cytidylate kinase family. Type 1 subfamily.

The protein localises to the cytoplasm. It carries out the reaction CMP + ATP = CDP + ADP. The enzyme catalyses dCMP + ATP = dCDP + ADP. The polypeptide is Cytidylate kinase (Sodalis glossinidius (strain morsitans)).